A 253-amino-acid polypeptide reads, in one-letter code: Acidic endochitinase pcht28 (253 aa).

An N-terminal signal peptide occupies residues 1–24 (MKFNIVSPVALSCLFFLFLTGTLA). The Proton donor role is filled by Glu-92. Cys-212 and Cys-244 form a disulfide bridge.

This sequence belongs to the glycosyl hydrolase 19 family. Chitinase class II subfamily.

It localises to the secreted. It is found in the extracellular space. The catalysed reaction is Random endo-hydrolysis of N-acetyl-beta-D-glucosaminide (1-&gt;4)-beta-linkages in chitin and chitodextrins.. Functionally, defense against chitin-containing fungal pathogens. This is Acidic endochitinase pcht28 from Solanum chilense (Tomato).